The primary structure comprises 202 residues: Peptide methionine sulfoxide reductase B1, chloroplastic (202 aa).

The transit peptide at Met-1–Gln-63 directs the protein to the chloroplast. A disordered region spans residues Tyr-48–Lys-67. Positions Glu-75–Leu-197 constitute a MsrB domain. Residues Cys-114, Cys-117, Cys-163, and Cys-166 each contribute to the Zn(2+) site. Cys-186 functions as the Nucleophile in the catalytic mechanism.

The protein belongs to the MsrB Met sulfoxide reductase family. Zn(2+) serves as cofactor. As to expression, expressed at low levels in stems, leaves, floral buds, flowers and siliques (at protein level).

Its subcellular location is the plastid. It localises to the chloroplast. The enzyme catalyses L-methionyl-[protein] + [thioredoxin]-disulfide + H2O = L-methionyl-(R)-S-oxide-[protein] + [thioredoxin]-dithiol. Functionally, catalyzes the reduction of methionine sulfoxide (MetSO) to methionine in proteins. Specifically reduces the MetSO R-enantiomer. Plays a protective role against oxidative stress by restoring activity to proteins that have been inactivated by methionine oxidation. May play an essential function in association with MSRB2 in maintaining vegetative growth during environmental constraints, through the preservation of photosynthetic antennae. MSRB1 and MSRB2 account for most of the leaf peptide MSR capacity. The protein is Peptide methionine sulfoxide reductase B1, chloroplastic of Arabidopsis thaliana (Mouse-ear cress).